The primary structure comprises 418 residues: Nuclear hormone receptor family member nhr-209 (418 aa).

A DNA-binding region (nuclear receptor) is located at residues 43 to 121 (PEKCAVCKNA…VGMDSTAIRA (79 aa)). NR C4-type zinc fingers lie at residues 46–66 (CAVCKNAAIGYHYNVPSCNGC) and 82–104 (CMNHKNCLDEIESDESQRLCKGC). An NR LBD domain is found at 174–414 (TIPDGFEDMR…SHPPKSLFDE (241 aa)). Residues 403–414 (ECSHPPKSLFDE) are AF-2.

Belongs to the nuclear hormone receptor family.

It localises to the nucleus. In terms of biological role, transcriptional regulator. Plays a role in modulation of lifespan and immunity. The polypeptide is Nuclear hormone receptor family member nhr-209 (Caenorhabditis elegans).